A 484-amino-acid polypeptide reads, in one-letter code: Glutamyl-tRNA(Gln) amidotransferase subunit A (484 aa).

Catalysis depends on charge relay system residues Lys77 and Ser152. Residue Ser176 is the Acyl-ester intermediate of the active site.

Belongs to the amidase family. GatA subfamily. Heterotrimer of A, B and C subunits.

It catalyses the reaction L-glutamyl-tRNA(Gln) + L-glutamine + ATP + H2O = L-glutaminyl-tRNA(Gln) + L-glutamate + ADP + phosphate + H(+). In terms of biological role, allows the formation of correctly charged Gln-tRNA(Gln) through the transamidation of misacylated Glu-tRNA(Gln) in organisms which lack glutaminyl-tRNA synthetase. The reaction takes place in the presence of glutamine and ATP through an activated gamma-phospho-Glu-tRNA(Gln). In Pseudomonas aeruginosa (strain ATCC 15692 / DSM 22644 / CIP 104116 / JCM 14847 / LMG 12228 / 1C / PRS 101 / PAO1), this protein is Glutamyl-tRNA(Gln) amidotransferase subunit A.